A 611-amino-acid polypeptide reads, in one-letter code: Threonine--tRNA ligase (611 aa).

Positions 1–145 (MRLLLIHSDH…TILPGEGAAA (145 aa)) are editing domain. Positions 195 to 487 (VHVDLMRAKE…TAAQEVPSFP (293 aa)) are catalytic. Zn(2+) is bound by residues Cys-287, His-339, and His-460.

It belongs to the class-II aminoacyl-tRNA synthetase family. As to quaternary structure, homodimer. Zn(2+) serves as cofactor.

It localises to the cytoplasm. It catalyses the reaction tRNA(Thr) + L-threonine + ATP = L-threonyl-tRNA(Thr) + AMP + diphosphate + H(+). In terms of biological role, catalyzes the attachment of threonine to tRNA(Thr) in a two-step reaction: L-threonine is first activated by ATP to form Thr-AMP and then transferred to the acceptor end of tRNA(Thr). Also edits incorrectly charged L-seryl-tRNA(Thr). In Methanoculleus marisnigri (strain ATCC 35101 / DSM 1498 / JR1), this protein is Threonine--tRNA ligase.